The primary structure comprises 133 residues: Phosphoribosyl-AMP cyclohydrolase (133 aa).

D77 contacts Mg(2+). C78 contributes to the Zn(2+) binding site. The Mg(2+) site is built by D79 and D81. Residues C95 and C102 each coordinate Zn(2+).

Belongs to the PRA-CH family. In terms of assembly, homodimer. Requires Mg(2+) as cofactor. Zn(2+) is required as a cofactor.

It is found in the cytoplasm. The catalysed reaction is 1-(5-phospho-beta-D-ribosyl)-5'-AMP + H2O = 1-(5-phospho-beta-D-ribosyl)-5-[(5-phospho-beta-D-ribosylamino)methylideneamino]imidazole-4-carboxamide. It participates in amino-acid biosynthesis; L-histidine biosynthesis; L-histidine from 5-phospho-alpha-D-ribose 1-diphosphate: step 3/9. Its function is as follows. Catalyzes the hydrolysis of the adenine ring of phosphoribosyl-AMP. The sequence is that of Phosphoribosyl-AMP cyclohydrolase from Pseudomonas fluorescens (strain Pf0-1).